The chain runs to 398 residues: Serine/threonine-protein kinase ppk23 (398 aa).

In terms of domain architecture, Protein kinase spans 74–359; the sequence is YEILEKIEEG…AKEALEHPYF (286 aa). ATP-binding positions include 80–88 and Lys-103; that span reads IEEGSYGIV. The active-site Proton acceptor is Asp-198. The segment at 359-398 is disordered; it reads FYESPRPKDPKFFPTFPSKAKGESKEKNVFQSFRSASPKK. Over residues 387–398 the composition is skewed to polar residues; it reads VFQSFRSASPKK.

It belongs to the protein kinase superfamily. Ser/Thr protein kinase family.

The protein resides in the nucleus. It carries out the reaction L-seryl-[protein] + ATP = O-phospho-L-seryl-[protein] + ADP + H(+). It catalyses the reaction L-threonyl-[protein] + ATP = O-phospho-L-threonyl-[protein] + ADP + H(+). This is Serine/threonine-protein kinase ppk23 (ppk23) from Schizosaccharomyces pombe (strain 972 / ATCC 24843) (Fission yeast).